A 391-amino-acid chain; its full sequence is 2,4,6-trihydroxybenzophenone synthase (391 aa).

Cys-165 is a catalytic residue.

It belongs to the thiolase-like superfamily. Chalcone/stilbene synthases family. As to quaternary structure, homodimer. As to expression, expressed in young fruit pericarp.

It catalyses the reaction benzoyl-CoA + 3 malonyl-CoA + 2 H(+) = 2,4,6-trihydroxybenzophenone + 3 CO2 + 4 CoA. Type III polyketide synthase involved in the biosynthesis of benzophenones and xanthones. Produces mainly 2,4,6-trihydroxybenzophenone together with minor amounts of tetraketide lactone, triketide lactone and diketide lactone. The preferred substrate is benzoyl-CoA, but can also use acetyl-CoA, phenylacetyl-CoA, hexanoyl-CoA, cinnamoyl-CoA, p-coumaroyl-CoA and salicoyl-CoA. The chain is 2,4,6-trihydroxybenzophenone synthase (BPS) from Garcinia mangostana (Mangosteen).